We begin with the raw amino-acid sequence, 274 residues long: Bis(5'-nucleosyl)-tetraphosphatase, symmetrical (274 aa).

The protein belongs to the Ap4A hydrolase family.

The catalysed reaction is P(1),P(4)-bis(5'-adenosyl) tetraphosphate + H2O = 2 ADP + 2 H(+). Hydrolyzes diadenosine 5',5'''-P1,P4-tetraphosphate to yield ADP. The protein is Bis(5'-nucleosyl)-tetraphosphatase, symmetrical of Buchnera aphidicola subsp. Acyrthosiphon pisum (strain Tuc7).